A 194-amino-acid polypeptide reads, in one-letter code: 7-methyl-GTP pyrophosphatase (194 aa).

The Proton acceptor role is filled by aspartate 71.

It belongs to the Maf family. YceF subfamily. The cofactor is a divalent metal cation.

It is found in the cytoplasm. The enzyme catalyses N(7)-methyl-GTP + H2O = N(7)-methyl-GMP + diphosphate + H(+). Its function is as follows. Nucleoside triphosphate pyrophosphatase that hydrolyzes 7-methyl-GTP (m(7)GTP). May have a dual role in cell division arrest and in preventing the incorporation of modified nucleotides into cellular nucleic acids. In Aromatoleum aromaticum (strain DSM 19018 / LMG 30748 / EbN1) (Azoarcus sp. (strain EbN1)), this protein is 7-methyl-GTP pyrophosphatase.